The chain runs to 269 residues: Interleukin-1 beta (269 aa).

A propeptide spanning residues 1–112 (MAMVPEITCD…EEPITFKNCD (112 aa)) is cleaved from the precursor.

It belongs to the IL-1 family. In terms of assembly, monomer. In its precursor form, weakly interacts with full-length MEFV; the mature cytokine does not interact at all. Interacts with integrins ITGAV:ITGBV and ITGA5:ITGB1; integrin-binding is required for IL1B signaling. Interacts with cargo receptor TMED10; the interaction is direct and is required for the secretion of IL1B mature form. Interacts with HSP90AB1; the interaction facilitates cargo translocation into the ERGIC. Interacts with HSP90B1; the interaction facilitates cargo translocation into the ERGIC.

It is found in the cytoplasm. The protein resides in the cytosol. Its subcellular location is the secreted. The protein localises to the lysosome. It localises to the extracellular exosome. Potent pro-inflammatory cytokine. Initially discovered as the major endogenous pyrogen, induces prostaglandin synthesis, neutrophil influx and activation, T-cell activation and cytokine production, B-cell activation and antibody production, and fibroblast proliferation and collagen production. Promotes Th17 differentiation of T-cells. Synergizes with IL12/interleukin-12 to induce IFNG synthesis from T-helper 1 (Th1) cells. Plays a role in angiogenesis by inducing VEGF production synergistically with TNF and IL6. Involved in transduction of inflammation downstream of pyroptosis: its mature form is specifically released in the extracellular milieu by passing through the gasdermin-D (GSDMD) pore. The polypeptide is Interleukin-1 beta (IL1B) (Trichosurus vulpecula (Brush-tailed possum)).